The chain runs to 387 residues: Phosphoglycerate kinase (387 aa).

Residues 21–23 (DLN), Arg36, and 59–62 (HLGR) contribute to the substrate site. Position 84 is an N6-acetyllysine (Lys84). Positions 113 and 146 each coordinate substrate. ATP contacts are provided by residues Lys197, Glu314, and 340 to 343 (GGDT).

The protein belongs to the phosphoglycerate kinase family. Monomer.

The protein localises to the cytoplasm. The catalysed reaction is (2R)-3-phosphoglycerate + ATP = (2R)-3-phospho-glyceroyl phosphate + ADP. Its pathway is carbohydrate degradation; glycolysis; pyruvate from D-glyceraldehyde 3-phosphate: step 2/5. This is Phosphoglycerate kinase from Escherichia coli O139:H28 (strain E24377A / ETEC).